The sequence spans 156 residues: Ribosome maturation factor RimP (156 aa).

The protein belongs to the RimP family.

The protein localises to the cytoplasm. Functionally, required for maturation of 30S ribosomal subunits. The polypeptide is Ribosome maturation factor RimP (Microcystis aeruginosa (strain NIES-843 / IAM M-2473)).